The primary structure comprises 537 residues: Inositol phosphorylceramide glucuronosyltransferase 1 (537 aa).

A helical transmembrane segment spans residues 6–26; it reads TSLWVLLLALVSIQLNGSFGS. Residues D124 and D126 each coordinate Mn(2+). Residues 124–126, 153–155, 180–184, and 248–255 contribute to the substrate site; these read DAD, NSG, TGGDQ, and HYTLGPLK. H248 contacts Mn(2+). 5 consecutive transmembrane segments (helical) span residues 293-313, 375-395, 406-426, 468-488, and 494-514; these read DELV…FCIY, VSVV…FAIV, VLVY…FLLF, MAFL…TALF, and MVGL…HLAV.

This sequence belongs to the glycosyltransferase 8 family. Glycogenin subfamily. It depends on Mn(2+) as a cofactor. In terms of tissue distribution, expressed in seedlings, roots, leaves, stems and siliques.

The protein resides in the golgi apparatus membrane. It catalyses the reaction glucuronate acceptor + UDP-alpha-D-glucuronate = acceptor beta-D-glucuronoside + UDP + H(+). The catalysed reaction is a 1D-myo-inositol-1-phospho-N-[(R)-2-hydroxy-very-long-chain fatty acyl]-(R)-4-hydroxysphingoid base + UDP-alpha-D-glucuronate = an alpha-D-glucuronosyl-(1&lt;-&gt;6)-1D-myo-inositol-1-phospho-N-[(R)-2-hydroxy-very-long-chain fatty acyl]-(R)-4-hydroxysphingoid base + UDP + H(+). The protein operates within sphingolipid metabolism. In terms of biological role, mediates the transfer of glucuronic acid (GlcA) from UDP-GlcA to glycosyl inositol phosphorylceramides (GIPCs). The formation of GIPCs sphingolipids is essential for pollen function, plant growth and defense. Required for global fitness. The protein is Inositol phosphorylceramide glucuronosyltransferase 1 of Arabidopsis thaliana (Mouse-ear cress).